We begin with the raw amino-acid sequence, 82 residues long: ATP synthase subunit c (82 aa).

Transmembrane regions (helical) follow at residues 7–27 (AASV…PGIG) and 57–77 (LAFM…LLFA).

It belongs to the ATPase C chain family. As to quaternary structure, F-type ATPases have 2 components, F(1) - the catalytic core - and F(0) - the membrane proton channel. F(1) has five subunits: alpha(3), beta(3), gamma(1), delta(1), epsilon(1). F(0) has four main subunits: a(1), b(1), b'(1) and c(10-14). The alpha and beta chains form an alternating ring which encloses part of the gamma chain. F(1) is attached to F(0) by a central stalk formed by the gamma and epsilon chains, while a peripheral stalk is formed by the delta, b and b' chains.

It is found in the cellular thylakoid membrane. Its function is as follows. F(1)F(0) ATP synthase produces ATP from ADP in the presence of a proton or sodium gradient. F-type ATPases consist of two structural domains, F(1) containing the extramembraneous catalytic core and F(0) containing the membrane proton channel, linked together by a central stalk and a peripheral stalk. During catalysis, ATP synthesis in the catalytic domain of F(1) is coupled via a rotary mechanism of the central stalk subunits to proton translocation. Functionally, key component of the F(0) channel; it plays a direct role in translocation across the membrane. A homomeric c-ring of between 10-14 subunits forms the central stalk rotor element with the F(1) delta and epsilon subunits. This is ATP synthase subunit c from Synechococcus sp. (strain WH7803).